The chain runs to 531 residues: 2,3-bisphosphoglycerate-independent phosphoglycerate mutase (531 aa).

Mn(2+) is bound by residues Asp-15 and Ser-65. The active-site Phosphoserine intermediate is the Ser-65. Residues His-126, 155–156, Arg-187, Arg-193, 257–260, and Lys-330 contribute to the substrate site; these read RD and RPDR. Mn(2+)-binding residues include Asp-397, His-401, Asp-438, His-439, and His-456.

This sequence belongs to the BPG-independent phosphoglycerate mutase family. As to quaternary structure, monomer. The cofactor is Mn(2+).

It catalyses the reaction (2R)-2-phosphoglycerate = (2R)-3-phosphoglycerate. Its pathway is carbohydrate degradation; glycolysis; pyruvate from D-glyceraldehyde 3-phosphate: step 3/5. In terms of biological role, catalyzes the interconversion of 2-phosphoglycerate and 3-phosphoglycerate. This is 2,3-bisphosphoglycerate-independent phosphoglycerate mutase from Thermosynechococcus vestitus (strain NIES-2133 / IAM M-273 / BP-1).